Reading from the N-terminus, the 520-residue chain is mRNA-capping enzyme subunit beta (520 aa).

The disordered stretch occupies residues 1–185; it reads MNVGSILNDD…PQPVFDDQDD (185 aa). Composition is skewed to polar residues over residues 11–21 and 44–56; these read PPSSGNANGND and ITSMLNDTPSDST. The span at 92 to 108 shows a compositional bias: low complexity; that stretch reads SSSSVGSSEHSSARSSP. Composition is skewed to basic and acidic residues over residues 126-135 and 149-176; these read PATKTEKKAE and KLEEHENDTNKVEKVVDSAPEPKPKKEP.

Belongs to the fungal TPase family. Heterodimer. The mRNA-capping enzyme is composed of two separate chains alpha and beta, respectively a mRNA guanylyltransferase and an mRNA 5'-triphosphate monophosphatase. Requires Mg(2+) as cofactor.

The protein localises to the nucleus. The catalysed reaction is a 5'-end triphospho-ribonucleoside in mRNA + H2O = a 5'-end diphospho-ribonucleoside in mRNA + phosphate + H(+). Its function is as follows. First step of mRNA capping. Converts the 5'-triphosphate end of a nascent mRNA chain into a diphosphate end. In Candida albicans (strain SC5314 / ATCC MYA-2876) (Yeast), this protein is mRNA-capping enzyme subunit beta (CET1).